Consider the following 2397-residue polypeptide: Cell wall alpha-1,3-glucan synthase mok11 (2397 aa).

The disordered stretch occupies residues 1683-1705 (SNQQSFDFKSSESDSFPQKSPSV). Low complexity predominate over residues 1687–1698 (SFDFKSSESDSF).

The protein belongs to the glycosyltransferase group 1 family.

The catalysed reaction is [(1-&gt;3)-alpha-D-glucosyl](n) + UDP-alpha-D-glucose = [(1-&gt;3)-alpha-D-glucosyl](n+1) + UDP + H(+). The sequence is that of Cell wall alpha-1,3-glucan synthase mok11 (mok11) from Schizosaccharomyces pombe (strain 972 / ATCC 24843) (Fission yeast).